The chain runs to 337 residues: Ferredoxin--NADP reductase (337 aa).

FAD is bound by residues Asp35, Gln43, Tyr48, Ala88, Phe122, Asp289, and Thr330.

It belongs to the ferredoxin--NADP reductase type 2 family. In terms of assembly, homodimer. FAD serves as cofactor.

The catalysed reaction is 2 reduced [2Fe-2S]-[ferredoxin] + NADP(+) + H(+) = 2 oxidized [2Fe-2S]-[ferredoxin] + NADPH. The protein is Ferredoxin--NADP reductase of Ehrlichia ruminantium (strain Welgevonden).